A 373-amino-acid polypeptide reads, in one-letter code: tRNA (guanine(26)-N(2))-dimethyltransferase (373 aa).

Positions Lys2–Ile365 constitute a Trm1 methyltransferase domain. S-adenosyl-L-methionine contacts are provided by Arg35, Arg66, Asp86, Asp113, and Ala114.

It belongs to the class I-like SAM-binding methyltransferase superfamily. Trm1 family.

It carries out the reaction guanosine(26) in tRNA + 2 S-adenosyl-L-methionine = N(2)-dimethylguanosine(26) in tRNA + 2 S-adenosyl-L-homocysteine + 2 H(+). In terms of biological role, dimethylates a single guanine residue at position 26 of a number of tRNAs using S-adenosyl-L-methionine as donor of the methyl groups. The polypeptide is tRNA (guanine(26)-N(2))-dimethyltransferase (Methanococcus maripaludis (strain C7 / ATCC BAA-1331)).